A 429-amino-acid polypeptide reads, in one-letter code: N5-carboxyaminoimidazole ribonucleotide synthase (429 aa).

ATP-binding positions include lysine 117, lysine 157, 194-197 (EERV), glutamate 202, and 280-281 (NE). In terms of domain architecture, ATP-grasp spans 121–310 (RQRLAAAGVA…QFEQHLRAVL (190 aa)). A disordered region spans residues 406–429 (RASDDAVGVPPACGGRSDEEERRL).

The protein belongs to the PurK/PurT family. In terms of assembly, homodimer.

The catalysed reaction is 5-amino-1-(5-phospho-beta-D-ribosyl)imidazole + hydrogencarbonate + ATP = 5-carboxyamino-1-(5-phospho-D-ribosyl)imidazole + ADP + phosphate + 2 H(+). It participates in purine metabolism; IMP biosynthesis via de novo pathway; 5-amino-1-(5-phospho-D-ribosyl)imidazole-4-carboxylate from 5-amino-1-(5-phospho-D-ribosyl)imidazole (N5-CAIR route): step 1/2. Functionally, catalyzes the ATP-dependent conversion of 5-aminoimidazole ribonucleotide (AIR) and HCO(3)(-) to N5-carboxyaminoimidazole ribonucleotide (N5-CAIR). This is N5-carboxyaminoimidazole ribonucleotide synthase from Mycobacterium bovis (strain ATCC BAA-935 / AF2122/97).